Here is a 144-residue protein sequence, read N- to C-terminus: Histone H2B.2, sperm (144 aa).

The interval 1–51 (MPRSPSKTSPRKGSPRRGSPSRKASPKRGGKGAKRAGKGGRRRNVVRRRRR) is disordered. 5 short sequence motifs (SPKK motif) span residues 4 to 7 (SPSK), 9 to 12 (SPRK), 14 to 17 (SPRR), 19 to 22 (SPSR), and 25 to 28 (SPKR). Ser-14, Ser-19, and Ser-25 each carry phosphoserine. Basic residues predominate over residues 24-51 (ASPKRGGKGAKRAGKGGRRRNVVRRRRR). Ser-131 carries an O-linked (GlcNAc) serine glycan. Lys-139 participates in a covalent cross-link: Glycyl lysine isopeptide (Lys-Gly) (interchain with G-Cter in ubiquitin).

The protein belongs to the histone H2B family. The nucleosome is a histone octamer containing two molecules each of H2A, H2B, H3 and H4 assembled in one H3-H4 heterotetramer and two H2A-H2B heterodimers. The octamer wraps approximately 147 bp of DNA. Post-translationally, monoubiquitination of Lys-139 gives a specific tag for epigenetic transcriptional activation and is also prerequisite for histone H3 'Lys-4' and 'Lys-79' methylation. In terms of processing, phosphorylated on SPKK motifs 3, 4 and 5; which may regulate DNA binding. Dephosphorylated during maturation of spermatids to mature sperm and rephosphorylated at fertilization. GlcNAcylation at Ser-131 promotes monoubiquitination of Lys-139. It fluctuates in response to extracellular glucose, and associates with transcribed genes.

The protein localises to the nucleus. It is found in the chromosome. Functionally, core component of nucleosome. Nucleosomes wrap and compact DNA into chromatin, limiting DNA accessibility to the cellular machineries which require DNA as a template. Histones thereby play a central role in transcription regulation, DNA repair, DNA replication and chromosomal stability. DNA accessibility is regulated via a complex set of post-translational modifications of histones, also called histone code, and nucleosome remodeling. The chain is Histone H2B.2, sperm from Strongylocentrotus purpuratus (Purple sea urchin).